The chain runs to 1534 residues: MDEGSADAGASGRRSRARGSEAVARSAALERLRAIRDGGARAAAAVQVRIEAPIYDTVAEEDYAALVARRRKDAGAFIVDDDGLGYADDGREEDWTHRTIHSSSDEGSDGEDGAPRKRKQPRPQSKRPPQQSAAAASLSAAAAMMGKQRLSSMFTSSVFRKPGSDRGRDSSLAADSIVDDVIAEFAPDDNDREERRRRVGRVCAPAPAPTTTAHIKAENVAVDTAMAFRSDNVFEAHEVSDHGNDMDMELKPDVEMEPKLDTPLGASAELANNSNSLEEPKQEANGEVKIEKVHRLNAKIKTEDSRNGDMASATAGWMKICGDGDNAGGEGAVAANSNTGVDESSEFELKDGALPFYILDAYEEPFGANSGTVYLFGKVEVGKRFHSCCVVVKNMQRCIYAIPSSSIFPRDTISRLEKNSTTSDSSPSLRASLHELASGLKSEIADKLSDFNVSNFAMTPVKRNYAFERTDLPNGEQYVLKINYPYKDPALPTDLRGQHFHALLGTNNSALELLLIKRKIKGPSWLSISKFLACPATQRVSWCKFEVTVDSPKDISVLMTSTTLEVPPVVVAAVNLKTIINEKHNVHEIVSASVICCHRVKIDSPMRSEDWQKRGMLSHFTVMRKLEGSIFPIGLSKESSDRNQKAGSNVLALESSERALLNRLMIELSKLDCDVLVGHNISGFDLDVLLHRAQTCKVPSNMWSKIGRLRRSVMPRLTKGNTLYGSGASPGIMSCIAGRLLCDTYLCSRDLLKEVSYSLTQLAETQLKKERKEVSPHDIPPMFQSSGALLKLVEYGETDACLALELMFHLSVLPLTRQLTNISGNLWGKTLQGSRAQRVEYLLLHAFHARKFIVPDKFARSKEFNSTKRKMNPDTEAARPDEADPSIDDEGHHVDQGKTKKGPSYAGGLVLEPKKGLYDKYVLLLDFNSLYPSIIQEYNICFTTVDRSADGNVPNLPASKTTGVLPELLKSLVERRRMVKSWLKTASGLKRQQFDIQQQALKLTANSMYGCLGFSNSRFYAKPLAELITLQGREILQNTVDLVQNNLNLEVIYGDTDSIMIHTGLDDISRAKGIAGKVIQEVNKKYRCLEIDLDGIYKRMLLLKKKKYAAIKVALDGSLRENIERKGLDMVRRDWSLLSKEIGDFCLNQILSGGSCDDVIESIHSSLVQVQEQMRGGQTELEKYIITKSLTKAPEDYPDAKNQPHVQVALRLKQNGYSGCSAGDTVPYIICSQQDSESTHSGGIAQRARHPEELKRNPDKWMIDIDYYLSQQIHPVVSRLCASIQGTSPARLAECLGLDSSKFQSRLTESDNQDTSSMLLSVIDDEDERYRGCEPLRLSCPSCSTTFDCPPVSSLIIGSSSGNVSNPNEGNDASINFWRRMRCPRCPDDTDESRVSPAVLANQMKRQADSFINLYYKGLLMCDDEGCKYSTHSVNLRVMGDSERGTICPNYPRCNGHLVRQYTEADLYRQLSYFCYVVDATRCLEKLDQKARLPFEKEFAALSQTINLALMEVQKIRDRCAFGWVQLKDLAISI.

Over residues 1-12 (MDEGSADAGASG) the composition is skewed to low complexity. Disordered stretches follow at residues 1-23 (MDEGSADAGASGRRSRARGSEAV), 96-141 (THRT…LSAA), and 864-905 (FNST…GPSY). Residues 116-125 (RKRKQPRPQS) are compositionally biased toward basic residues. Positions 127-141 (RPPQQSAAAASLSAA) are enriched in low complexity. Basic and acidic residues-rich tracts occupy residues 864 to 882 (FNSTKRKMNPDTEAARPDE) and 889 to 898 (DEGHHVDQGK). Residues cysteine 1340, cysteine 1343, cysteine 1383, cysteine 1386, cysteine 1422, cysteine 1427, cysteine 1448, and cysteine 1454 each coordinate Zn(2+). Residues 1340–1386 (CPSCSTTFDCPPVSSLIIGSSSGNVSNPNEGNDASINFWRRMRCPRC) form a CysA-type zinc finger. Positions 1422-1451 (CDDEGCKYSTHSVNLRVMGDSERGTICPNY) match the CysB motif motif.

It belongs to the DNA polymerase type-B family.

It localises to the nucleus. It catalyses the reaction DNA(n) + a 2'-deoxyribonucleoside 5'-triphosphate = DNA(n+1) + diphosphate. Functionally, polymerase alpha in a complex with DNA primase is a replicative polymerase. This chain is DNA polymerase alpha catalytic subunit, found in Oryza sativa subsp. japonica (Rice).